Consider the following 75-residue polypeptide: uncharacterized protein (75 aa).

A signal peptide spans 1–19 (MQCVCLCVFVLLLAGCVTS).

Nacreous layer of shell (at protein level).

The protein localises to the secreted. This is an uncharacterized protein from Margaritifera margaritifera (Freshwater pearl mussel).